Reading from the N-terminus, the 207-residue chain is Cytochrome c biogenesis ATP-binding export protein CcmA (207 aa).

The ABC transporter domain maps to 4 to 207 (LEARELLCER…RISLTQTGAA (204 aa)). 36-43 (GSNGAGKT) contributes to the ATP binding site.

Belongs to the ABC transporter superfamily. CcmA exporter (TC 3.A.1.107) family. The complex is composed of two ATP-binding proteins (CcmA) and two transmembrane proteins (CcmB).

The protein localises to the cell inner membrane. It carries out the reaction heme b(in) + ATP + H2O = heme b(out) + ADP + phosphate + H(+). Functionally, part of the ABC transporter complex CcmAB involved in the biogenesis of c-type cytochromes; once thought to export heme, this seems not to be the case, but its exact role is uncertain. Responsible for energy coupling to the transport system. The polypeptide is Cytochrome c biogenesis ATP-binding export protein CcmA (Escherichia coli O6:H1 (strain CFT073 / ATCC 700928 / UPEC)).